Reading from the N-terminus, the 543-residue chain is Mitochondrial distribution and morphology protein 34 (543 aa).

Positions 1-202 (MSFNVNWNSL…LPTLLHKVSL (202 aa)) constitute an SMP-LTD domain. Positions 519 to 543 (AFSHNDPSITPFELPPPPYHQLSRA) are disordered.

Belongs to the MDM34 family. Component of the ER-mitochondria encounter structure (ERMES) or MDM complex, composed of MMM1, MDM10, MDM12 and MDM34.

Its subcellular location is the mitochondrion outer membrane. In terms of biological role, component of the ERMES/MDM complex, which serves as a molecular tether to connect the endoplasmic reticulum (ER) and mitochondria. Components of this complex are involved in the control of mitochondrial shape and protein biogenesis, and function in nonvesicular lipid trafficking between the ER and mitochondria. MDM34 is required for the interaction of the ER-resident membrane protein MMM1 and the outer mitochondrial membrane-resident beta-barrel protein MDM10. This chain is Mitochondrial distribution and morphology protein 34, found in Clavispora lusitaniae (strain ATCC 42720) (Yeast).